A 339-amino-acid chain; its full sequence is MTIQKNWQELIRPNKLQVVPGSDPSRFATLIAEPLERGFGQTLGNALRRILLSSLQGAAVQSVHIDGVLHEFSSIAGVREDVTDIVLNIKDIAIRMQGEGPKRMVVKKQGPGTVTAGDIQTVGDVVVLNPDLQICTLDDGAEIRMEFTVASGKGYVAAERNRPEDAPIGLIPVDSLYSPVRKVSYKVENTREGQILDYDKLTMTIETNGGVTPEDAVAFAARILQDQLNVFVNFEEPRKEVTTEIIPDLAFNPAFLKKVDELELSVRSANCLKNDNIVYIGDLVQKSEAEMLRTPNFGRKSLNEIKEVLAQMGLHLGMEVPGWPPENIDELAKRFEDHY.

The segment at 1–235 is alpha N-terminal domain (alpha-NTD); sequence MTIQKNWQEL…DQLNVFVNFE (235 aa). Residues 251–339 form an alpha C-terminal domain (alpha-CTD) region; the sequence is FNPAFLKKVD…ELAKRFEDHY (89 aa).

Belongs to the RNA polymerase alpha chain family. In terms of assembly, homodimer. The RNAP catalytic core consists of 2 alpha, 1 beta, 1 beta' and 1 omega subunit. When a sigma factor is associated with the core the holoenzyme is formed, which can initiate transcription.

It catalyses the reaction RNA(n) + a ribonucleoside 5'-triphosphate = RNA(n+1) + diphosphate. Its function is as follows. DNA-dependent RNA polymerase catalyzes the transcription of DNA into RNA using the four ribonucleoside triphosphates as substrates. This is DNA-directed RNA polymerase subunit alpha from Nitrobacter winogradskyi (strain ATCC 25391 / DSM 10237 / CIP 104748 / NCIMB 11846 / Nb-255).